Consider the following 167-residue polypeptide: UPF0303 protein mlr5144 (167 aa).

The protein belongs to the UPF0303 family.

In Mesorhizobium japonicum (strain LMG 29417 / CECT 9101 / MAFF 303099) (Mesorhizobium loti (strain MAFF 303099)), this protein is UPF0303 protein mlr5144.